Here is a 371-residue protein sequence, read N- to C-terminus: Glutamate 5-kinase (371 aa).

Residue Lys-10 coordinates ATP. The substrate site is built by Ser-50, Asp-137, and Asn-149. ATP is bound by residues Ser-169–Asp-170 and Thr-208–Lys-214. In terms of domain architecture, PUA spans Glu-274 to Asp-352.

This sequence belongs to the glutamate 5-kinase family.

Its subcellular location is the cytoplasm. The catalysed reaction is L-glutamate + ATP = L-glutamyl 5-phosphate + ADP. It participates in amino-acid biosynthesis; L-proline biosynthesis; L-glutamate 5-semialdehyde from L-glutamate: step 1/2. Functionally, catalyzes the transfer of a phosphate group to glutamate to form L-glutamate 5-phosphate. The polypeptide is Glutamate 5-kinase (Dictyoglomus turgidum (strain DSM 6724 / Z-1310)).